Reading from the N-terminus, the 412-residue chain is Arginine biosynthesis bifunctional protein ArgJ (412 aa).

The substrate site is built by threonine 155, lysine 181, threonine 192, glutamate 279, asparagine 407, and serine 412. The active-site Nucleophile is threonine 192.

Belongs to the ArgJ family. Heterotetramer of two alpha and two beta chains.

It localises to the cytoplasm. The enzyme catalyses N(2)-acetyl-L-ornithine + L-glutamate = N-acetyl-L-glutamate + L-ornithine. The catalysed reaction is L-glutamate + acetyl-CoA = N-acetyl-L-glutamate + CoA + H(+). It participates in amino-acid biosynthesis; L-arginine biosynthesis; L-ornithine and N-acetyl-L-glutamate from L-glutamate and N(2)-acetyl-L-ornithine (cyclic): step 1/1. The protein operates within amino-acid biosynthesis; L-arginine biosynthesis; N(2)-acetyl-L-ornithine from L-glutamate: step 1/4. Its function is as follows. Catalyzes two activities which are involved in the cyclic version of arginine biosynthesis: the synthesis of N-acetylglutamate from glutamate and acetyl-CoA as the acetyl donor, and of ornithine by transacetylation between N(2)-acetylornithine and glutamate. This chain is Arginine biosynthesis bifunctional protein ArgJ, found in Aromatoleum aromaticum (strain DSM 19018 / LMG 30748 / EbN1) (Azoarcus sp. (strain EbN1)).